The chain runs to 389 residues: Pre-mRNA-splicing factor PRP46 (389 aa).

WD repeat units lie at residues 83 to 123 (AHQG…LKAV), 126 to 165 (GHVL…SDAG), 173 to 212 (GHLG…EAMT), 215 to 254 (GHTN…TELL), 257 to 298 (NHSK…NEFG), 308 to 347 (DNSR…LQQS), and 356 to 389 (PEQS…GTSY).

This sequence belongs to the WD repeat PRL1/PRL2 family. In terms of assembly, associated with the spliceosome.

The protein resides in the cytoplasm. It localises to the nucleus. Functionally, involved in pre-mRNA splicing and required for cell cycle progression at G2/M. This chain is Pre-mRNA-splicing factor PRP46 (PRP46), found in Candida albicans (strain SC5314 / ATCC MYA-2876) (Yeast).